Reading from the N-terminus, the 309-residue chain is Putative F-box protein At4g05475 (309 aa).

The interval 1–26 is disordered; it reads MATSTTLQSLLMKEDEEQRNKRRTTS. The F-box domain maps to 37 to 84; sequence RINWVDLPPELTTSILLRLSVTDILDNARKLCRAWRRICKDPSMWRKI.

The polypeptide is Putative F-box protein At4g05475 (Arabidopsis thaliana (Mouse-ear cress)).